Here is a 491-residue protein sequence, read N- to C-terminus: Cobyric acid synthase (491 aa).

Positions 251-444 (GITIAVIRLP…LHGLFTNDEF (194 aa)) constitute a GATase cobBQ-type domain. The active-site Nucleophile is the Cys329. The active site involves His436.

The protein belongs to the CobB/CobQ family. CobQ subfamily.

It participates in cofactor biosynthesis; adenosylcobalamin biosynthesis. Functionally, catalyzes amidations at positions B, D, E, and G on adenosylcobyrinic A,C-diamide. NH(2) groups are provided by glutamine, and one molecule of ATP is hydrogenolyzed for each amidation. The polypeptide is Cobyric acid synthase (Chloroflexus aggregans (strain MD-66 / DSM 9485)).